Consider the following 470-residue polypeptide: Methylenetetrahydrofolate--tRNA-(uracil-5-)-methyltransferase TrmFO (470 aa).

10 to 15 (GAGLAG) is a binding site for FAD.

This sequence belongs to the MnmG family. TrmFO subfamily. FAD serves as cofactor.

Its subcellular location is the cytoplasm. It catalyses the reaction uridine(54) in tRNA + (6R)-5,10-methylene-5,6,7,8-tetrahydrofolate + NADH + H(+) = 5-methyluridine(54) in tRNA + (6S)-5,6,7,8-tetrahydrofolate + NAD(+). The enzyme catalyses uridine(54) in tRNA + (6R)-5,10-methylene-5,6,7,8-tetrahydrofolate + NADPH + H(+) = 5-methyluridine(54) in tRNA + (6S)-5,6,7,8-tetrahydrofolate + NADP(+). Functionally, catalyzes the folate-dependent formation of 5-methyl-uridine at position 54 (M-5-U54) in all tRNAs. The protein is Methylenetetrahydrofolate--tRNA-(uracil-5-)-methyltransferase TrmFO of Prochlorococcus marinus (strain MIT 9301).